Reading from the N-terminus, the 139-residue chain is Short neuropeptide F (139 aa).

Residues 1–23 constitute a propeptide that is removed on maturation; the sequence is MGRARRTVRAPAQHDALGGHALA. The tract at residues 1-48 is disordered; that stretch reads MGRARRTVRAPAQHDALGGHALARKSVRSPSRRLRFGRRSDPDMPPQA. Over residues 22–37 the composition is skewed to basic residues; that stretch reads LARKSVRSPSRRLRFG. The residue at position 36 (F36) is a Phenylalanine amide. Residues 40–62 constitute a propeptide that is removed on maturation; it reads SDPDMPPQAPLDEMNELLSLREV. Residue F70 is modified to Phenylalanine amide. Positions 74 to 96 are excised as a propeptide; that stretch reads SEERAVPHIFPQEFLTQEQDRAV. A Phenylalanine amide modification is found at F105. Residues 109–139 constitute a propeptide that is removed on maturation; the sequence is SDNNMFLLPYESALPQEVKANGSVEDDRQQE.

It belongs to the NPY family. SNPF peptide 1: Expressed in corpora cardiaca (CC), corpora allata (CA), antennal lobe (AL) and gnathal ganglion (GNG) (at protein level). Expression in AL detected in all animals, in GNG in most animals, expression in CC and CA in some animals (at protein level). sNPF peptide 2: Expressed in corpora cardiaca (CC), corpora allata (CA), antennal lobe (AL) and gnathal ganglion (GNG) (at protein level). Expression in AL detected in all animals, in GNG, CC and CA in most animals (at protein level). sNPF peptide 3: Expressed in corpora cardiaca (CC), corpora allata (CA), antennal lobe (AL) and gnathal ganglion (GNG) (at protein level). Expression detected in all animals (at protein level).

The protein resides in the secreted. Its function is as follows. Plays a role in controlling food intake and regulating body size. This is Short neuropeptide F from Agrotis ipsilon (Black cutworm moth).